Here is a 115-residue protein sequence, read N- to C-terminus: Nucleoid-associated protein Rpic_1036 (115 aa).

Belongs to the YbaB/EbfC family. Homodimer.

Its subcellular location is the cytoplasm. It localises to the nucleoid. Its function is as follows. Binds to DNA and alters its conformation. May be involved in regulation of gene expression, nucleoid organization and DNA protection. This is Nucleoid-associated protein Rpic_1036 from Ralstonia pickettii (strain 12J).